Here is a 724-residue protein sequence, read N- to C-terminus: Probable metal-nicotianamine transporter YSL13 (724 aa).

The interval 1–54 is disordered; the sequence is MATVPTPSEAHGGATPTAADVEMVEASELRRRGKPSGDRATGPSRDGAAAAAEE. The next 14 helical transmembrane spans lie at 80–100, 103–123, 148–168, 190–210, 252–272, 310–330, 355–375, 423–443, 455–475, 487–507, 541–561, 603–623, 640–660, and 675–695; these read AFVV…KLNL, GIIP…VRLW, CVVA…ILSM, LGWI…GLVP, LGIF…YTAT, IVNV…WPLI, VFIA…KMII, IPWY…IGTV, ILVA…GTGL, LAIF…LAGL, FVSQ…VFWL, LNLC…RDLV, FYIG…LFVW, and VASG…VLAL.

This sequence belongs to the YSL (TC 2.A.67.2) family. In terms of tissue distribution, expressed in leaves and at low levels in root cortex.

It is found in the membrane. Functionally, may be involved in the transport of nicotianamine-chelated metals. The chain is Probable metal-nicotianamine transporter YSL13 (YSL13) from Oryza sativa subsp. japonica (Rice).